Consider the following 262-residue polypeptide: Glutamate racemase (262 aa).

Substrate-binding positions include 5 to 6 and 37 to 38; these read DS and YG. Residue cysteine 69 is the Proton donor/acceptor of the active site. Position 70 to 71 (70 to 71) interacts with substrate; that stretch reads NT. Cysteine 181 serves as the catalytic Proton donor/acceptor. A substrate-binding site is contributed by 182–183; sequence TH.

Belongs to the aspartate/glutamate racemases family.

It catalyses the reaction L-glutamate = D-glutamate. It participates in cell wall biogenesis; peptidoglycan biosynthesis. Functionally, provides the (R)-glutamate required for cell wall biosynthesis. This chain is Glutamate racemase, found in Buchnera aphidicola subsp. Acyrthosiphon pisum (strain Tuc7).